We begin with the raw amino-acid sequence, 347 residues long: Dual specificity mitogen-activated protein kinase kinase mek-1 (347 aa).

The interval 1–42 (MERDFDLGMGRPGGLGGLGGEPIMQQMPQPAPHHPSRSSNDH) is disordered. Residues 10-20 (GRPGGLGGLGG) are compositionally biased toward gly residues. Positions 72-325 (LQFVEDIGHG…YDMLLQHPFV (254 aa)) constitute a Protein kinase domain. ATP is bound by residues 78 to 86 (IGHGSCGTV) and Lys99. Asp193 (proton acceptor) is an active-site residue. Phosphoserine is present on residues Ser221 and Ser225.

The protein belongs to the protein kinase superfamily. STE Ser/Thr protein kinase family. MAP kinase kinase subfamily. Interacts with shc-1; the interaction is independent of mek-1 catalytic activity, is constitutive and may facilitate mlk-1-mediated phosphorylation by bringing mlk-1 and mek-1 together. Mg(2+) is required as a cofactor. In terms of processing, may be phosphorylated at Ser-221 and/or Ser-225 by mlk-1. As to expression, expressed in pharyngeal muscles, uterine endothelial cells, intestine and in neurons of ring ganglia, ventral ganglion and ganglia around anus. Expressed also in hypodermis and body muscles.

The catalysed reaction is L-seryl-[protein] + ATP = O-phospho-L-seryl-[protein] + ADP + H(+). The enzyme catalyses L-threonyl-[protein] + ATP = O-phospho-L-threonyl-[protein] + ADP + H(+). It carries out the reaction L-tyrosyl-[protein] + ATP = O-phospho-L-tyrosyl-[protein] + ADP + H(+). With respect to regulation, may be activated by phosphorylation at Ser-221 and Ser-225. Functionally, dual specificity protein kinase which may phosphorylate kgb-1 and thereby is an essential component of the JNK pathway composed of mlk-1, mek-1 and kgb-1. May also have a synergistic role with sek-1 in phosphorylating pmk-1. Involved in the response to environmental stress including heavy metal ions (Cu(2+) and Cd(2+)), oxidative stress and starvation. In association with sek-1, regulates germline cell apoptosis in response to oxidative, osmotic and heat shock stresses. Involved in resistance to pathogenic bacteria infection. Involved in axon regeneration after injury. In Caenorhabditis elegans, this protein is Dual specificity mitogen-activated protein kinase kinase mek-1.